A 426-amino-acid polypeptide reads, in one-letter code: 10-deoxymethynolide desosaminyltransferase (426 aa).

The protein belongs to the glycosyltransferase 28 family. Forms a complex with DesVIII.

It carries out the reaction 10-deoxymethynolide + dTDP-alpha-D-desosamine = 10-deoxymethymycin + dTDP + H(+). It participates in antibiotic biosynthesis. Its function is as follows. Involved in the biosynthesis of the macrolide antibiotics methymycin, neomethymycin, narbomycin, and pikromycin. Catalyzes the attachment of dTDP-D-desosamine onto 12- and 14-membered macrolactone rings 10-deoxymethynolide and narbonolide to produce 10-deoxymethymycin (YC-17) and narbomycin. DesVII is unique among glycosyltransferases in that it requires an additional protein component, DesVIII, for its activity. DesVII can recognize and process not only cyclic substrates of different ring size, but also a variety of linear substrates albeit with reduced, but measurable activities. Both L-sugars and D-sugars are recognized as substrates and variant substitutions at C-3 and C-4 are tolerated, but deoxygenation at C-6 is required. The polypeptide is 10-deoxymethynolide desosaminyltransferase (Streptomyces venezuelae).